A 283-amino-acid polypeptide reads, in one-letter code: 5'-nucleotidase SurE (283 aa).

A divalent metal cation is bound by residues D14, D15, S47, and N105.

The protein belongs to the SurE nucleotidase family. Requires a divalent metal cation as cofactor.

The protein resides in the cytoplasm. It catalyses the reaction a ribonucleoside 5'-phosphate + H2O = a ribonucleoside + phosphate. Nucleotidase that shows phosphatase activity on nucleoside 5'-monophosphates. The chain is 5'-nucleotidase SurE from Chlamydia trachomatis serovar L2 (strain ATCC VR-902B / DSM 19102 / 434/Bu).